We begin with the raw amino-acid sequence, 356 residues long: Tyrosine recombinase XerS (356 aa).

The region spanning 16–121 (VMPWYVLDYY…ALSSLYKYLT (106 aa)) is the Core-binding (CB) domain. The Tyr recombinase domain occupies 169 to 354 (AFLDYVDKEY…VNDEQKNALD (186 aa)). Active-site residues include Arg-210, Lys-234, His-306, Arg-309, and His-332. Catalysis depends on Tyr-341, which acts as the O-(3'-phospho-DNA)-tyrosine intermediate.

Belongs to the 'phage' integrase family. XerS subfamily.

It is found in the cytoplasm. Its activity is regulated as follows. FtsK is required for recombination. In terms of biological role, site-specific tyrosine recombinase, which acts by catalyzing the cutting and rejoining of the recombining DNA molecules. Essential to convert dimers of the bacterial chromosome into monomers to permit their segregation at cell division. This is Tyrosine recombinase XerS from Streptococcus pyogenes serotype M28 (strain MGAS6180).